Consider the following 907-residue polypeptide: Probable ubiquitin-conjugating enzyme E2 24 (907 aa).

Disordered stretches follow at residues 1–23 (MEMSLTDSDWDSSSDSGSSEHEE) and 485–509 (SSTVSSEGSVQDLSQKISQSDEASS). Residues 495–509 (QDLSQKISQSDEASS) are compositionally biased toward polar residues. Residues 662–822 (SWVKKVQQEW…AFLITCKSMI (161 aa)) form the UBC core domain. Cys748 serves as the catalytic Glycyl thioester intermediate.

It belongs to the ubiquitin-conjugating enzyme family. As to quaternary structure, interacts with PHO1. Interacts with NLA. As to expression, expressed in the vascular tissues of cotyledons, leaves, roots, sepals, filaments, anthers and junctions between the inflorescence stems and siliques.

The protein localises to the golgi apparatus membrane. The protein resides in the endoplasmic reticulum membrane. It carries out the reaction S-ubiquitinyl-[E1 ubiquitin-activating enzyme]-L-cysteine + [E2 ubiquitin-conjugating enzyme]-L-cysteine = [E1 ubiquitin-activating enzyme]-L-cysteine + S-ubiquitinyl-[E2 ubiquitin-conjugating enzyme]-L-cysteine.. Its pathway is protein modification; protein ubiquitination. Its function is as follows. E2 ubiquitin-protein ligase that mediates E1-dependent protein ubiquitination. Mediates PHO1 degradation through multivesicular body-mediated vacuolar proteolysis in response to inorganic phosphate (Pi) availability. Negatively regulates the protein abundance of PHF1 and PHT1s under Pi-sufficient conditions by facilitating the degradation of PHT1 proteins at the endomembrane. Functions cooperatively with NLA to regulate the abundance of the inorganic phosphate (Pi) transporters PHT1-1, PHT1-2 and PHT1-3 in different subcellular compartments. Regulates Pi homeostasis by mediating, cooperatively with NLA, polyubiquitination of PHT1-4 and its targeting for degradation. The polypeptide is Probable ubiquitin-conjugating enzyme E2 24 (Arabidopsis thaliana (Mouse-ear cress)).